The chain runs to 97 residues: Large ribosomal subunit protein bL28 (97 aa).

The protein belongs to the bacterial ribosomal protein bL28 family.

The sequence is that of Large ribosomal subunit protein bL28 from Rickettsia bellii (strain OSU 85-389).